The following is a 251-amino-acid chain: uncharacterized protein (251 aa).

The N-terminal stretch at 1-18 (MRILIILSIILCSLFARA) is a signal peptide.

The protein belongs to the MlaA family.

This is an uncharacterized protein from Rickettsia felis (strain ATCC VR-1525 / URRWXCal2) (Rickettsia azadi).